Reading from the N-terminus, the 178-residue chain is Extracellular fatty acid-binding protein (178 aa).

The signal sequence occupies residues 1–20 (MRTLALSLALALLCLLHTEA). Ala21 carries the blocked amino end (Ala) modification. Position 43 (Thr43) interacts with enterobactin. Tyr72 and Lys104 together coordinate 1-tetradecanoyl-sn-glycerol 3-phosphate. A disulfide bridge links Cys80 with Cys173. Positions 104, 123, and 134 each coordinate enterobactin. 134–136 (RLY) provides a ligand contact to 1-tetradecanoyl-sn-glycerol 3-phosphate.

This sequence belongs to the calycin superfamily. Lipocalin family. Monomer. Does not seem to be glycosylated. Expressed in egg white (at protein level). Expressed in the magnum of the oviduct (at protein level). Preferentially synthesized in nonproliferating cells.

It localises to the secreted. Siderocalin-like lipocalin tightly binding a variety of bacterial ferric siderophores, also binds long-chain unsaturated fatty acids such as linoleic acid, oleic acid, arachidonic acid and, with a lower affinity, long chain saturated fatty acids such as steraic acid. May act as an antibacterial factor, through dual ligand specificity, both as a siderophore-sequestrating molecule and a lysophosphatidic acid (LPA) sensor. This Gallus gallus (Chicken) protein is Extracellular fatty acid-binding protein (EXFABP).